Here is a 357-residue protein sequence, read N- to C-terminus: Snake venom metalloproteinase H4 (357 aa).

An N-terminal signal peptide occupies residues 1 to 6 (FPYQGS). Positions 7–176 (SIMLESGKVN…KKASQLIVST (170 aa)) are excised as a propeptide. The 178-residue stretch at 180–357 (RYMEIVIVVD…EVIKYFLDSK (178 aa)) folds into the Peptidase M12B domain. Histidine 316 serves as a coordination point for Zn(2+). Glutamate 317 is an active-site residue. Positions 320 and 326 each coordinate Zn(2+). The cysteines at positions 333 and 339 are disulfide-linked.

Belongs to the venom metalloproteinase (M12B) family. P-I subfamily. Monomer. The cofactor is Zn(2+). As to expression, expressed by the venom gland.

Its subcellular location is the secreted. In terms of biological role, snake venom metalloproteinase that impairs hemostasis in the envenomed animal. This Deinagkistrodon acutus (Hundred-pace snake) protein is Snake venom metalloproteinase H4.